A 348-amino-acid polypeptide reads, in one-letter code: Putative [LysW]-L-2-aminoadipate/[LysW]-L-glutamate phosphate reductase (348 aa).

An NADP(+)-binding site is contributed by 9-12 (SGYV). Cys-149 is an active-site residue. Asn-315 provides a ligand contact to NADP(+).

The protein belongs to the NAGSA dehydrogenase family. Type 1 subfamily. LysY sub-subfamily.

The protein resides in the cytoplasm. The enzyme catalyses [amino-group carrier protein]-C-terminal-N-(1-carboxy-5-oxopentan-1-yl)-L-glutamine + phosphate + NADP(+) = [amino-group carrier protein]-C-terminal-N-(1-carboxy-5-phosphooxy-5-oxopentan-1-yl)-L-glutamine + NADPH + H(+). It catalyses the reaction [amino-group carrier protein]-C-terminal-gamma-(L-glutamyl-5-semialdehyde)-L-glutamate + phosphate + NADP(+) = [amino-group carrier protein]-C-terminal-gamma-(5-phospho-L-glutamyl)-L-glutamate + NADPH + H(+). The protein operates within amino-acid biosynthesis; L-lysine biosynthesis via AAA pathway; L-lysine from L-alpha-aminoadipate (Thermus route): step 3/5. Its pathway is amino-acid biosynthesis; L-arginine biosynthesis. In terms of biological role, involved in both the arginine and lysine biosynthetic pathways. The protein is Putative [LysW]-L-2-aminoadipate/[LysW]-L-glutamate phosphate reductase of Cenarchaeum symbiosum (strain A).